Reading from the N-terminus, the 156-residue chain is Succinate dehydrogenase assembly factor 2-B, mitochondrial (156 aa).

A mitochondrion-targeting transit peptide spans 1–24; that stretch reads MLRQFIVSTVGRRLQLPMMAQSRL.

Belongs to the SDHAF2 family. Interacts with the flavoprotein subunit within the SDH catalytic dimer.

It localises to the mitochondrion matrix. Plays an essential role in the assembly of succinate dehydrogenase (SDH), an enzyme complex (also referred to as respiratory complex II) that is a component of both the tricarboxylic acid (TCA) cycle and the mitochondrial electron transport chain, and which couples the oxidation of succinate to fumarate with the reduction of ubiquinone (coenzyme Q) to ubiquinol. Required for flavinylation (covalent attachment of FAD) of the flavoprotein subunit of the SDH catalytic dimer. The sequence is that of Succinate dehydrogenase assembly factor 2-B, mitochondrial from Drosophila melanogaster (Fruit fly).